The following is a 132-amino-acid chain: Sec-independent protein translocase protein TatB (132 aa).

The chain crosses the membrane as a helical span at residues 1–21 (MFDIGFWELVLISVVGLVVLG). Residues 70–132 (GMEDLSPELK…KVSAADKKAE (63 aa)) are disordered. Composition is skewed to basic and acidic residues over residues 96–108 (YADKAQSETETAK) and 115–132 (SAEKVEEIKVSAADKKAE).

It belongs to the TatB family. In terms of assembly, the Tat system comprises two distinct complexes: a TatABC complex, containing multiple copies of TatA, TatB and TatC subunits, and a separate TatA complex, containing only TatA subunits. Substrates initially bind to the TatABC complex, which probably triggers association of the separate TatA complex to form the active translocon.

The protein localises to the cell inner membrane. Functionally, part of the twin-arginine translocation (Tat) system that transports large folded proteins containing a characteristic twin-arginine motif in their signal peptide across membranes. Together with TatC, TatB is part of a receptor directly interacting with Tat signal peptides. TatB may form an oligomeric binding site that transiently accommodates folded Tat precursor proteins before their translocation. The protein is Sec-independent protein translocase protein TatB of Vibrio parahaemolyticus serotype O3:K6 (strain RIMD 2210633).